The following is a 135-amino-acid chain: Sex-regulated protein janus-A (135 aa).

K37 is a substrate binding site. H63 functions as the Proton acceptor in the catalytic mechanism. A substrate-binding site is contributed by S104–G106.

This sequence belongs to the janus family. In terms of tissue distribution, somatic and germline cells. Isoform B is expressed in both sexes and in somatic and germ line cells. Isoform A is expressed in males and is germ line specific.

JanA and janB regulate somatic sex differentiation. The polypeptide is Sex-regulated protein janus-A (janA) (Drosophila melanogaster (Fruit fly)).